We begin with the raw amino-acid sequence, 463 residues long: ATP synthase subunit beta (463 aa).

Position 151-158 (151-158) interacts with ATP; sequence GGAGVGKT.

It belongs to the ATPase alpha/beta chains family. In terms of assembly, F-type ATPases have 2 components, CF(1) - the catalytic core - and CF(0) - the membrane proton channel. CF(1) has five subunits: alpha(3), beta(3), gamma(1), delta(1), epsilon(1). CF(0) has three main subunits: a(1), b(2) and c(9-12). The alpha and beta chains form an alternating ring which encloses part of the gamma chain. CF(1) is attached to CF(0) by a central stalk formed by the gamma and epsilon chains, while a peripheral stalk is formed by the delta and b chains.

The protein localises to the cell membrane. The catalysed reaction is ATP + H2O + 4 H(+)(in) = ADP + phosphate + 5 H(+)(out). Produces ATP from ADP in the presence of a proton gradient across the membrane. The catalytic sites are hosted primarily by the beta subunits. The sequence is that of ATP synthase subunit beta from Clostridium botulinum (strain Okra / Type B1).